A 540-amino-acid chain; its full sequence is Putative cysteine ligase BshC (540 aa).

Residues 457-477 (EKNRAFIQGQIAFLKERMERE) adopt a coiled-coil conformation.

Belongs to the BshC family.

Involved in bacillithiol (BSH) biosynthesis. May catalyze the last step of the pathway, the addition of cysteine to glucosamine malate (GlcN-Mal) to generate BSH. This is Putative cysteine ligase BshC from Shouchella clausii (strain KSM-K16) (Alkalihalobacillus clausii).